The sequence spans 241 residues: Small ribosomal subunit protein uS2 (241 aa).

This sequence belongs to the universal ribosomal protein uS2 family.

The polypeptide is Small ribosomal subunit protein uS2 (Escherichia coli O127:H6 (strain E2348/69 / EPEC)).